The sequence spans 804 residues: Probable replication endonuclease from prophage-like region 2 (804 aa).

Catalysis depends on O-(5'-phospho-DNA)-tyrosine intermediate residues tyrosine 503 and tyrosine 507.

It belongs to the phage GPA family.

Functionally, possible endonuclease which induces a single-strand cut and initiates DNA replication. The chain is Probable replication endonuclease from prophage-like region 2 from Salmonella typhi.